Here is a 337-residue protein sequence, read N- to C-terminus: Tetraacyldisaccharide 4'-kinase (337 aa).

Residue 55–62 participates in ATP binding; the sequence is TIGGNGKT.

It belongs to the LpxK family.

It catalyses the reaction a lipid A disaccharide + ATP = a lipid IVA + ADP + H(+). It participates in glycolipid biosynthesis; lipid IV(A) biosynthesis; lipid IV(A) from (3R)-3-hydroxytetradecanoyl-[acyl-carrier-protein] and UDP-N-acetyl-alpha-D-glucosamine: step 6/6. In terms of biological role, transfers the gamma-phosphate of ATP to the 4'-position of a tetraacyldisaccharide 1-phosphate intermediate (termed DS-1-P) to form tetraacyldisaccharide 1,4'-bis-phosphate (lipid IVA). The polypeptide is Tetraacyldisaccharide 4'-kinase (Blochmanniella pennsylvanica (strain BPEN)).